The primary structure comprises 249 residues: 1-(5-phosphoribosyl)-5-[(5-phosphoribosylamino)methylideneamino] imidazole-4-carboxamide isomerase (249 aa).

The active-site Proton acceptor is D8. Catalysis depends on D129, which acts as the Proton donor.

This sequence belongs to the HisA/HisF family.

The protein localises to the cytoplasm. The enzyme catalyses 1-(5-phospho-beta-D-ribosyl)-5-[(5-phospho-beta-D-ribosylamino)methylideneamino]imidazole-4-carboxamide = 5-[(5-phospho-1-deoxy-D-ribulos-1-ylimino)methylamino]-1-(5-phospho-beta-D-ribosyl)imidazole-4-carboxamide. It participates in amino-acid biosynthesis; L-histidine biosynthesis; L-histidine from 5-phospho-alpha-D-ribose 1-diphosphate: step 4/9. In Nitratidesulfovibrio vulgaris (strain ATCC 29579 / DSM 644 / CCUG 34227 / NCIMB 8303 / VKM B-1760 / Hildenborough) (Desulfovibrio vulgaris), this protein is 1-(5-phosphoribosyl)-5-[(5-phosphoribosylamino)methylideneamino] imidazole-4-carboxamide isomerase.